The sequence spans 293 residues: N-acetylneuraminate lyase (293 aa).

Residues S48 and S49 each contribute to the aceneuramate site. The Proton donor role is filled by Y137. K165 acts as the Schiff-base intermediate with substrate in catalysis. The aceneuramate site is built by T167, G189, D191, E192, and S208.

This sequence belongs to the DapA family. NanA subfamily. In terms of assembly, homotetramer.

It is found in the cytoplasm. The catalysed reaction is aceneuramate = aldehydo-N-acetyl-D-mannosamine + pyruvate. It participates in amino-sugar metabolism; N-acetylneuraminate degradation; D-fructose 6-phosphate from N-acetylneuraminate: step 1/5. In terms of biological role, catalyzes the reversible aldol cleavage of N-acetylneuraminic acid (sialic acid; Neu5Ac) to form pyruvate and N-acetylmannosamine (ManNAc) via a Schiff base intermediate. The polypeptide is N-acetylneuraminate lyase (Staphylococcus aureus (strain Mu3 / ATCC 700698)).